The following is a 220-amino-acid chain: Fructose-6-phosphate aldolase (220 aa).

K85 serves as the catalytic Schiff-base intermediate with substrate.

This sequence belongs to the transaldolase family. Type 3A subfamily. Homodecamer.

It localises to the cytoplasm. The catalysed reaction is beta-D-fructose 6-phosphate = dihydroxyacetone + D-glyceraldehyde 3-phosphate. Its function is as follows. Catalyzes the reversible formation of fructose 6-phosphate from dihydroxyacetone and D-glyceraldehyde 3-phosphate via an aldolization reaction. In Salmonella heidelberg (strain SL476), this protein is Fructose-6-phosphate aldolase.